Consider the following 132-residue polypeptide: Large ribosomal subunit protein uL14 (132 aa).

The protein belongs to the universal ribosomal protein uL14 family. As to quaternary structure, part of the 50S ribosomal subunit. Forms a cluster with proteins L3 and L24e, part of which may contact the 16S rRNA in 2 intersubunit bridges.

In terms of biological role, binds to 23S rRNA. Forms part of two intersubunit bridges in the 70S ribosome. In Methanospirillum hungatei JF-1 (strain ATCC 27890 / DSM 864 / NBRC 100397 / JF-1), this protein is Large ribosomal subunit protein uL14.